The primary structure comprises 20 residues: Brevinin-1DYa (20 aa).

Residues C14 and C20 are joined by a disulfide bond.

Expressed by the skin glands.

It localises to the secreted. Its function is as follows. Antimicrobial peptide. Has low activity against the Gram-positive bacterium S.aureus and the Gram-negative bacterium E.coli (MIC&lt;15 uM). Has a strong hemolytic activity. In Rana dybowskii (Dybovsky's frog), this protein is Brevinin-1DYa.